A 100-amino-acid polypeptide reads, in one-letter code: Urease subunit gamma (100 aa).

The protein belongs to the urease gamma subunit family. As to quaternary structure, heterotrimer of UreA (gamma), UreB (beta) and UreC (alpha) subunits. Three heterotrimers associate to form the active enzyme.

Its subcellular location is the cytoplasm. The enzyme catalyses urea + 2 H2O + H(+) = hydrogencarbonate + 2 NH4(+). The protein operates within nitrogen metabolism; urea degradation; CO(2) and NH(3) from urea (urease route): step 1/1. In Prochlorococcus marinus (strain MIT 9303), this protein is Urease subunit gamma.